The primary structure comprises 474 residues: Rhodanese-like domain-containing protein 7 (474 aa).

Disordered stretches follow at residues 20-68 (SSPP…SSLK) and 179-198 (VSPE…PLAA). The segment covering 53 to 68 (QSQPHKLSSSPSSSLK) has biased composition (low complexity). The Rhodanese domain occupies 245–368 (SDPETVVIDV…YLEEVPKTES (124 aa)). C328 serves as the catalytic Cysteine persulfide intermediate. The disordered stretch occupies residues 432–474 (RARARQTQFEEWGVIGGPDKGRRPATKPDSPRKKINAKLGSSI).

The sequence is that of Rhodanese-like domain-containing protein 7 (STR7) from Arabidopsis thaliana (Mouse-ear cress).